The following is a 265-amino-acid chain: NAD kinase (265 aa).

Aspartate 45 (proton acceptor) is an active-site residue. NAD(+) is bound by residues 45 to 46 (DG), 121 to 122 (NE), arginine 147, aspartate 149, 160 to 165 (TAYSKS), alanine 184, and glutamine 222.

Belongs to the NAD kinase family. A divalent metal cation is required as a cofactor.

It localises to the cytoplasm. The enzyme catalyses NAD(+) + ATP = ADP + NADP(+) + H(+). Involved in the regulation of the intracellular balance of NAD and NADP, and is a key enzyme in the biosynthesis of NADP. Catalyzes specifically the phosphorylation on 2'-hydroxyl of the adenosine moiety of NAD to yield NADP. The polypeptide is NAD kinase (Lacticaseibacillus paracasei (strain ATCC 334 / BCRC 17002 / CCUG 31169 / CIP 107868 / KCTC 3260 / NRRL B-441) (Lactobacillus paracasei)).